A 339-amino-acid polypeptide reads, in one-letter code: tRNA N6-adenosine threonylcarbamoyltransferase (339 aa).

Fe cation contacts are provided by H111 and H115. Residues 134-138 (LVSGG), D167, G180, and N270 each bind substrate. A Fe cation-binding site is contributed by D298.

The protein belongs to the KAE1 / TsaD family. Fe(2+) is required as a cofactor.

Its subcellular location is the cytoplasm. The catalysed reaction is L-threonylcarbamoyladenylate + adenosine(37) in tRNA = N(6)-L-threonylcarbamoyladenosine(37) in tRNA + AMP + H(+). Functionally, required for the formation of a threonylcarbamoyl group on adenosine at position 37 (t(6)A37) in tRNAs that read codons beginning with adenine. Is involved in the transfer of the threonylcarbamoyl moiety of threonylcarbamoyl-AMP (TC-AMP) to the N6 group of A37, together with TsaE and TsaB. TsaD likely plays a direct catalytic role in this reaction. In Alkalilimnicola ehrlichii (strain ATCC BAA-1101 / DSM 17681 / MLHE-1), this protein is tRNA N6-adenosine threonylcarbamoyltransferase.